Consider the following 1050-residue polypeptide: Isoleucine--tRNA ligase (1050 aa).

Positions 45–56 (PYPSSPIPHIGT) match the 'HIGH' region motif. Positions 594–598 (EMHKS) match the 'KMSKS' region motif. K597 is a binding site for ATP.

It belongs to the class-I aminoacyl-tRNA synthetase family. IleS type 2 subfamily. Monomer. It depends on Zn(2+) as a cofactor.

Its subcellular location is the cytoplasm. It carries out the reaction tRNA(Ile) + L-isoleucine + ATP = L-isoleucyl-tRNA(Ile) + AMP + diphosphate. In terms of biological role, catalyzes the attachment of isoleucine to tRNA(Ile). As IleRS can inadvertently accommodate and process structurally similar amino acids such as valine, to avoid such errors it has two additional distinct tRNA(Ile)-dependent editing activities. One activity is designated as 'pretransfer' editing and involves the hydrolysis of activated Val-AMP. The other activity is designated 'posttransfer' editing and involves deacylation of mischarged Val-tRNA(Ile). The polypeptide is Isoleucine--tRNA ligase (Sulfolobus acidocaldarius (strain ATCC 33909 / DSM 639 / JCM 8929 / NBRC 15157 / NCIMB 11770)).